A 186-amino-acid chain; its full sequence is Threonylcarbamoyl-AMP synthase (186 aa).

Residues 3–186 enclose the YrdC-like domain; it reads ELTLDSAVAT…DALSGNVLRS (184 aa).

It belongs to the SUA5 family. TsaC subfamily.

It is found in the cytoplasm. The catalysed reaction is L-threonine + hydrogencarbonate + ATP = L-threonylcarbamoyladenylate + diphosphate + H2O. Its function is as follows. Required for the formation of a threonylcarbamoyl group on adenosine at position 37 (t(6)A37) in tRNAs that read codons beginning with adenine. Catalyzes the conversion of L-threonine, HCO(3)(-)/CO(2) and ATP to give threonylcarbamoyl-AMP (TC-AMP) as the acyladenylate intermediate, with the release of diphosphate. The protein is Threonylcarbamoyl-AMP synthase of Stenotrophomonas maltophilia (strain K279a).